The primary structure comprises 62 residues: MYTFSYSTHNELLEFFHLFVTIQWLALIGQKTLSQFCLYRNAAVVGFFIRFTFGTPIFLQLL.

2 consecutive transmembrane segments (helical) span residues 9-29 (HNEL…ALIG) and 42-62 (AAVV…LQLL).

The protein resides in the membrane. This is an uncharacterized protein from Saccharomyces cerevisiae (strain ATCC 204508 / S288c) (Baker's yeast).